The primary structure comprises 352 residues: MVLSLQTLAKKVLAGQRPTKCHPHFLKCYGLWWHNGPMIFDQNQKKIWSPIFTDGVHINAALVKAVAENNYDLIKLFTEWGANIDYSLLSVNTERTRDLCRELGAKEQLKQEEVLYYFNIIKRNLTSSNIILCHEVFSHNPILETINRTKLRGIIYEQLEALMENTDILSELLTKYWYGIAIEFNLTKAIHYFYQRYVHLHQWRLMYALFYNNVCDLHELYAKEKIRMDMDEMLKWACRKNYNYLTIYYCCIVLGADINQAMFHSIQFYNIGNMFFCIDLGANAIEEGKTLALQKDKSFIASLLSINCYSMNDSLSLKETDPEVIKRMLKDYHSKNMSIAHKYYIKHGFNDI.

The protein belongs to the asfivirus MGF 360 family. As to quaternary structure, interacts with host STAT1; this interaction mediates STAT1 degradation through apoptosis. Interacts with host STAT2; this interaction mediates STAT2 degradation through the proteasome.

The protein localises to the host cytoplasm. Plays a role in virus cell tropism, and may be required for efficient virus replication in macrophages. In Ornithodoros (relapsing fever ticks), this protein is Protein MGF 360-9L.